The chain runs to 256 residues: Ribonuclease HII (256 aa).

Residues Lys-73–Val-256 enclose the RNase H type-2 domain. Residues Asp-79, Glu-80, and Asp-171 each contribute to the a divalent metal cation site.

Belongs to the RNase HII family. The cofactor is Mn(2+). Requires Mg(2+) as cofactor.

It localises to the cytoplasm. It catalyses the reaction Endonucleolytic cleavage to 5'-phosphomonoester.. Functionally, endonuclease that specifically degrades the RNA of RNA-DNA hybrids. In Acetivibrio thermocellus (strain ATCC 27405 / DSM 1237 / JCM 9322 / NBRC 103400 / NCIMB 10682 / NRRL B-4536 / VPI 7372) (Clostridium thermocellum), this protein is Ribonuclease HII.